The chain runs to 119 residues: MKYEISKIRAENRNYHKKEKNKVSKGYQALISSSFYQTIPSSSSFAFPQSVRVVVADTLLVHHTFDWKHHPLAVAYRSHRKSQQHQTQGNQVLRGTRKLESPTVGPRPGLRRQHTRNFL.

A disordered region spans residues 78 to 119; the sequence is SHRKSQQHQTQGNQVLRGTRKLESPTVGPRPGLRRQHTRNFL. Over residues 84–93 the composition is skewed to polar residues; the sequence is QHQTQGNQVL. Residues 109–119 are compositionally biased toward basic residues; the sequence is GLRRQHTRNFL.

This is an uncharacterized protein from Saccharomyces cerevisiae (strain ATCC 204508 / S288c) (Baker's yeast).